The following is a 185-amino-acid chain: FK506-binding protein 2 (185 aa).

The first 20 residues, 1 to 20, serve as a signal peptide directing secretion; the sequence is MQGLLLSLSLLASAAVGVLA. Residues 41–129 form the PPIase FKBP-type domain; sequence GDKINVHYKG…VFETELVGIE (89 aa). Positions 182–185 match the Prevents secretion from ER motif; sequence HNEL.

Belongs to the FKBP-type PPIase family. FKBP2 subfamily.

The protein localises to the endoplasmic reticulum. It carries out the reaction [protein]-peptidylproline (omega=180) = [protein]-peptidylproline (omega=0). Inhibited by both FK506 and rapamycin. PPIases accelerate the folding of proteins. It catalyzes the cis-trans isomerization of proline imidic peptide bonds in oligopeptides. This Podospora anserina (Pleurage anserina) protein is FK506-binding protein 2 (FPR2).